A 218-amino-acid chain; its full sequence is DNA-directed RNA polymerases IV and V subunit 5B (218 aa).

The protein belongs to the archaeal Rpo5/eukaryotic RPB5 RNA polymerase subunit family. In terms of assembly, component of the RNA polymerase IV and V complexes. Interacts with NRPD1. As to expression, expressed inleaves, flower buds, flowers and siliques.

The protein localises to the nucleus. DNA-dependent RNA polymerase catalyzes the transcription of DNA into RNA using the four ribonucleoside triphosphates as substrates. Component of RNA polymerases IV and V which mediate short-interfering RNAs (siRNA) accumulation and subsequent RNA-directed DNA methylation-dependent (RdDM) transcriptional gene silencing (TGS) of endogenous repeated sequences, including transposable elements. The protein is DNA-directed RNA polymerases IV and V subunit 5B (NRPD5B) of Arabidopsis thaliana (Mouse-ear cress).